A 246-amino-acid polypeptide reads, in one-letter code: Sugar fermentation stimulation protein homolog (246 aa).

Belongs to the SfsA family.

This Prochlorococcus marinus (strain MIT 9312) protein is Sugar fermentation stimulation protein homolog.